We begin with the raw amino-acid sequence, 472 residues long: Serralysin A (472 aa).

Residues 1–17 constitute a propeptide that is removed on maturation; the sequence is MEKNLSSRDDDALHSLS. His186 serves as a coordination point for Zn(2+). Glu187 is a catalytic residue. Residues His190 and Tyr221 each coordinate Zn(2+). Ca(2+)-binding residues include Arg258, Gly260, Thr262, Asp290, Gly292, Gly293, Thr332, Glu334, Gly339, Gly341, Asp343, Asn348, Ala350, Asn352, Gly356, Gly357, Ala358, Gly359, Asp361, Gly365, Gly366, Gly367, Gly368, Asp370, Gly374, Gly375, Gly377, Asp379, Asp388, Asp395, and Asp405. Hemolysin-type calcium-binding repeat units follow at residues 337-354 and 355-372; these read IGGS…DNIL and RGGA…ADRL.

This sequence belongs to the peptidase M10B family. Requires Ca(2+) as cofactor. Zn(2+) serves as cofactor.

The protein resides in the secreted. It carries out the reaction Preferential cleavage of bonds with hydrophobic residues in P1'.. The sequence is that of Serralysin A (prtA) from Dickeya chrysanthemi (Pectobacterium chrysanthemi).